The following is a 343-amino-acid chain: Multidrug resistance protein MdtN (343 aa).

The Cytoplasmic segment spans residues 1-12; the sequence is MESTPKKAPRSK. A helical; Signal-anchor for type II membrane protein membrane pass occupies residues 13-33; it reads FPALLVVALALVALVFVIWRV. The Periplasmic segment spans residues 34–343; sequence DSAPSTNDAY…ASAVANLEPQ (310 aa).

The protein belongs to the membrane fusion protein (MFP) (TC 8.A.1) family. As to quaternary structure, could be part of a tripartite efflux system composed of MdtN, MdtO and MdtP.

It is found in the cell inner membrane. Could be involved in resistance to puromycin, acriflavine and tetraphenylarsonium chloride. This Escherichia coli O157:H7 protein is Multidrug resistance protein MdtN (mdtN).